A 355-amino-acid chain; its full sequence is 3-dehydroquinate synthase (355 aa).

NAD(+) is bound by residues 106–110, 130–131, lysine 143, and lysine 152; these read GVVGD and TS. Glutamate 185, histidine 246, and histidine 262 together coordinate Zn(2+).

It belongs to the sugar phosphate cyclases superfamily. Dehydroquinate synthase family. The cofactor is Co(2+). Requires Zn(2+) as cofactor. NAD(+) serves as cofactor.

The protein localises to the cytoplasm. It catalyses the reaction 7-phospho-2-dehydro-3-deoxy-D-arabino-heptonate = 3-dehydroquinate + phosphate. The protein operates within metabolic intermediate biosynthesis; chorismate biosynthesis; chorismate from D-erythrose 4-phosphate and phosphoenolpyruvate: step 2/7. Catalyzes the conversion of 3-deoxy-D-arabino-heptulosonate 7-phosphate (DAHP) to dehydroquinate (DHQ). The polypeptide is 3-dehydroquinate synthase (Latilactobacillus sakei subsp. sakei (strain 23K) (Lactobacillus sakei subsp. sakei)).